Here is a 244-residue protein sequence, read N- to C-terminus: Putative membrane peptidase YdiL (244 aa).

6 helical membrane-spanning segments follow: residues 7–27 (FIILTYIIMQFSALIAIPLLF), 44–64 (AQGLWSVISFIACLVVVLLIL), 80–100 (IGLSILWAIAGFFIALFSQGI), 127–147 (AVPLMIIVSSIVGPILEEIIF), 159–179 (TNFFFAGLISSVIFGIVHADL), and 202–222 (IWVPIFAHLMMNTFVVIMQLE). Residues Glu-143 and His-176 each act as proton donor/acceptor in the active site.

The protein belongs to the peptidase U48 family.

It is found in the cell membrane. In terms of biological role, may function as endopeptidase which proteolytically removes the C-terminal three residues of farnesylated peptides containing the CAAX motif where C is cysteine, A is an aliphatic amino acid and X is any amino acid. This chain is Putative membrane peptidase YdiL (ydiL), found in Bacillus subtilis (strain 168).